The following is a 355-amino-acid chain: Methionine import ATP-binding protein MetN 1 (355 aa).

Residues 6 to 245 (IDLKDIAVTF…PKAPLTVDFV (240 aa)) enclose the ABC transporter domain. Position 42–49 (42–49 (GYSGAGKS)) interacts with ATP.

It belongs to the ABC transporter superfamily. Methionine importer (TC 3.A.1.24) family. As to quaternary structure, the complex is composed of two ATP-binding proteins (MetN), two transmembrane proteins (MetI) and a solute-binding protein (MetQ).

It localises to the cell membrane. It carries out the reaction L-methionine(out) + ATP + H2O = L-methionine(in) + ADP + phosphate + H(+). The enzyme catalyses D-methionine(out) + ATP + H2O = D-methionine(in) + ADP + phosphate + H(+). Its function is as follows. Part of the ABC transporter complex MetNIQ involved in methionine import. Responsible for energy coupling to the transport system. This chain is Methionine import ATP-binding protein MetN 1, found in Lactiplantibacillus plantarum (strain ATCC BAA-793 / NCIMB 8826 / WCFS1) (Lactobacillus plantarum).